We begin with the raw amino-acid sequence, 302 residues long: tRNA dimethylallyltransferase (302 aa).

21–28 is a binding site for ATP; the sequence is GPTASGKS. 23–28 provides a ligand contact to substrate; it reads TASGKS.

This sequence belongs to the IPP transferase family. Monomer. It depends on Mg(2+) as a cofactor.

It carries out the reaction adenosine(37) in tRNA + dimethylallyl diphosphate = N(6)-dimethylallyladenosine(37) in tRNA + diphosphate. In terms of biological role, catalyzes the transfer of a dimethylallyl group onto the adenine at position 37 in tRNAs that read codons beginning with uridine, leading to the formation of N6-(dimethylallyl)adenosine (i(6)A). This Paracoccus denitrificans (strain Pd 1222) protein is tRNA dimethylallyltransferase.